The following is a 609-amino-acid chain: Copper resistance protein A (609 aa).

The tat-type signal signal peptide spans 1-32 (MESRTSRRTFVKGLAAAGVLGGLGLWRSPSWA). Positions 100, 102, 142, and 144 each coordinate Cu cation. 5 repeat units span residues 367 to 374 (DDMGMGGM), 375 to 382 (DHGSMDGM), 408 to 415 (DHSKMSTM), 419 to 426 (DHGAMSGM), and 427 to 434 (DHGAMGGM). A 5 X 8 AA tandem repeats of D-H-X-X-M-X-G-M region spans residues 367–434 (DDMGMGGMDH…GMDHGAMGGM (68 aa)). Cu cation-binding residues include His-542, His-545, His-547, His-590, Cys-591, His-592, His-596, and Met-601.

The protein belongs to the multicopper oxidase family. CopA subfamily. In terms of processing, predicted to be exported by the Tat system. The position of the signal peptide cleavage has been experimentally proven.

It localises to the periplasm. Its function is as follows. Mediates copper resistance by sequestration of copper in the periplasm along with the copper-binding protein CopC. May have oxidase activity. In Pseudomonas syringae pv. tomato, this protein is Copper resistance protein A (copA).